We begin with the raw amino-acid sequence, 345 residues long: Phosphoribosylformylglycinamidine cyclo-ligase (345 aa).

Belongs to the AIR synthase family.

Its subcellular location is the cytoplasm. It carries out the reaction 2-formamido-N(1)-(5-O-phospho-beta-D-ribosyl)acetamidine + ATP = 5-amino-1-(5-phospho-beta-D-ribosyl)imidazole + ADP + phosphate + H(+). It functions in the pathway purine metabolism; IMP biosynthesis via de novo pathway; 5-amino-1-(5-phospho-D-ribosyl)imidazole from N(2)-formyl-N(1)-(5-phospho-D-ribosyl)glycinamide: step 2/2. This is Phosphoribosylformylglycinamidine cyclo-ligase from Shewanella oneidensis (strain ATCC 700550 / JCM 31522 / CIP 106686 / LMG 19005 / NCIMB 14063 / MR-1).